We begin with the raw amino-acid sequence, 63 residues long: Large ribosomal subunit protein uL29 (63 aa).

It belongs to the universal ribosomal protein uL29 family.

The sequence is that of Large ribosomal subunit protein uL29 from Photorhabdus laumondii subsp. laumondii (strain DSM 15139 / CIP 105565 / TT01) (Photorhabdus luminescens subsp. laumondii).